Reading from the N-terminus, the 117-residue chain is Large ribosomal subunit protein uL24 (117 aa).

The protein belongs to the universal ribosomal protein uL24 family. Part of the 50S ribosomal subunit.

Functionally, one of two assembly initiator proteins, it binds directly to the 5'-end of the 23S rRNA, where it nucleates assembly of the 50S subunit. In terms of biological role, one of the proteins that surrounds the polypeptide exit tunnel on the outside of the subunit. This is Large ribosomal subunit protein uL24 from Thermosynechococcus vestitus (strain NIES-2133 / IAM M-273 / BP-1).